Consider the following 314-residue polypeptide: Short-chain dehydrogenase/reductase sthC (314 aa).

The span at Met-1–Val-10 shows a compositional bias: polar residues. A disordered region spans residues Met-1–Met-27. NADP(+) is bound by residues Val-56, Lys-80, Asp-105, Asn-132, and Arg-167. Residue Ser-191 is the Proton donor of the active site. Tyr-222 and Lys-226 together coordinate NADP(+). Tyr-222 (proton acceptor) is an active-site residue. The active-site Lowers pKa of active site Tyr is Lys-226.

This sequence belongs to the short-chain dehydrogenases/reductases (SDR) family.

The enzyme catalyses dehydroprobetaenone I + AH2 = probetaenone I + A. The catalysed reaction is betaenone C + AH2 = betaenone B + A. It participates in mycotoxin biosynthesis. Its function is as follows. Short-chain dehydrogenase/reductase; part of the gene cluster that mediates the biosynthesis of the phytotoxin stemphyloxin II. The first step of the pathway is the synthesis of dehydroprobetaenone I by the polyketide synthase sthA and the enoyl reductase sthE via condensation of one acetyl-CoA starter unit with 7 malonyl-CoA units and 5 methylations. The C-terminal reductase (R) domain of sthA catalyzes the reductive release of the polyketide chain. Because sthA lacks a designated enoylreductase (ER) domain, the required activity is provided the enoyl reductase sthE. The short-chain dehydrogenase/reductase sthC then catalyzes reduction of dehydroprobetaenone I to probetaenone I. The cytochrome P450 monooxygenase sthF catalyzes successive epoxidation, oxidation (resulting from epoxide opening) and hydroxylation to install a tertiary alcohol in the decaline ring to yield betaenone C from dehydroprobetaenone I and betaenone B from probetaenone I. The FAD-linked oxidoreductase sthB is responsible for the conversion of betaenone C to betaenone A via an intramolecular aldol reaction between C-1 and C-17 to form the bridged tricyclic system in betaenone A. Finally, the cytochrome P450 monooxygenase sthD catalyzes the hydroxylation of C-15 to afford the final metabolite stemphyloxin II. This is Short-chain dehydrogenase/reductase sthC from Phaeosphaeria nodorum (strain SN15 / ATCC MYA-4574 / FGSC 10173) (Glume blotch fungus).